A 386-amino-acid chain; its full sequence is Pepsin A (386 aa).

The first 15 residues, 1 to 15 (MKWLLLISLVALSEC), serve as a signal peptide directing secretion. Residues 16–60 (AIVKVPLVRKKSLRQNLIEHGLLNDFLKNQSPNPASKYFPQEPTV) constitute a propeptide, activation peptide. A Peptidase A1 domain is found at 74 to 383 (YFGTIGIGTP…DRANNQVGLA (310 aa)). Aspartate 92 is a catalytic residue. Intrachain disulfides connect cysteine 105–cysteine 110 and cysteine 266–cysteine 270. Residue aspartate 275 is part of the active site. Cysteines 309 and 342 form a disulfide.

The protein belongs to the peptidase A1 family.

The protein resides in the secreted. It carries out the reaction Preferential cleavage: hydrophobic, preferably aromatic, residues in P1 and P1' positions. Cleaves 1-Phe-|-Val-2, 4-Gln-|-His-5, 13-Glu-|-Ala-14, 14-Ala-|-Leu-15, 15-Leu-|-Tyr-16, 16-Tyr-|-Leu-17, 23-Gly-|-Phe-24, 24-Phe-|-Phe-25 and 25-Phe-|-Tyr-26 bonds in the B chain of insulin.. Shows particularly broad specificity; although bonds involving phenylalanine and leucine are preferred, many others are also cleaved to some extent. The sequence is that of Pepsin A (PGA) from Canis lupus familiaris (Dog).